A 189-amino-acid chain; its full sequence is Transmembrane protein 229b (189 aa).

Residues 1 to 17 lie on the Cytoplasmic side of the membrane; that stretch reads MATTVTPEPLTALSRWY. The helical transmembrane segment at 18 to 38 threads the bilayer; the sequence is LYAIHGYFCEVMFTAAWEFVV. At 39 to 43 the chain is on the extracellular side; sequence NCNWK. The helical transmembrane segment at 44–64 threads the bilayer; that stretch reads FPGVTSVWALFIYGTCILIVE. Topologically, residues 65-75 are cytoplasmic; sequence RMYLCLKDRCN. A helical transmembrane segment spans residues 76–96; sequence VLLRCIIYTLWTYFWEFGTGF. The Extracellular portion of the chain corresponds to 97-114; the sequence is LLRQFNACPWDYSEFKYN. A helical transmembrane segment spans residues 115-135; sequence FMGLITAEYAVPWFCASFIVE. Residues 136–189 lie on the Cytoplasmic side of the membrane; the sequence is RLVIRNTLRLRFDEVAESGQAEERLDRGGGGRGGRRGRGARAGATSANGYVKVD. The interval 158–189 is disordered; the sequence is ERLDRGGGGRGGRRGRGARAGATSANGYVKVD.

This sequence belongs to the TMEM229 family.

Its subcellular location is the membrane. The chain is Transmembrane protein 229b (tmem229b) from Danio rerio (Zebrafish).